An 821-amino-acid polypeptide reads, in one-letter code: MILPMSSACLGQFLRASPRGMIEQFNRAPPLRVSIRGAAGVEKSLGLGRNAGSQQGMQKNQLQDKIRKQLREVQLSPSSYDTAWVAMVPVQGSHQTPRFPQCIEWILQNQHDDGSWGTNLPGSVVNKDILLCTLACVVALKRWNTGRDHISRGLNFIGKNFWVAMDEQTIAPVGFNITFSGLLNLATGTGLEFPVMQTDIDGIFHMRKIELERDAYGTASSRRAFMAYVSEGLGSLQDWDQVMAYQRKNRSIFNSPSAAAATVIHGHNDSALCYLDSLVSKLDGPVPVMYPQNAYSQLGMVDTLEKMGISNNFSCEISDILDMIYRLWIHNEEELMLDMGTCAMAFRLLRMHGYDISSDGMAQFVEQSSFDDSIHGYLNDTKALLELYRSSQIRCLEDDLILQDIGSWSARVLQEKISSKMTHKSEMLEVEYALKFPVYATLERLEQKRNIEQFKTKEQLKIEGFKLLKSGYRGAITHDEILALAVDEFHSSQSVYQQELQDLNSWVAQTRLDELKFARLMPSITYFSAAATMFPSELSEARIAWTQNCILTTTVDDFFDGDGSKEEMENLVKLIEKWDGHGEIGFSSECVEILFYAIYNTSKQIAEKAVPLQKRNVVDHIAESWWFTVRGMLTEAEWRMDKYVPTTVEEYMSAAVDSFALGPTITSAALFVGPELSEEVFRSKEYIHLMNLANTIGRLLNDMQTYEKEIKMGKVNSVMLHALSHSGGGRGSPEASMEEAKREMRRVLQGSRCDLLRLVTRDGGVVPPPCRKLFWFMSKVLHFVYMEKDGYFTADGMMASANAVILDPLQVTLLPSGLGTL.

5 residues coordinate Mg(2+): Asp-556, Asp-560, Asn-701, Thr-705, and Glu-709. The short motif at 556–560 is the DDXXD motif element; the sequence is DDFFD.

This sequence belongs to the terpene synthase family. Requires Mg(2+) as cofactor. Highly expressed in roots, at intermediate levels in stems and at lower levels in leaves.

The catalysed reaction is ent-copalyl diphosphate = ent-pimara-8(14),15-diene + diphosphate. The protein operates within secondary metabolite biosynthesis; terpenoid biosynthesis. In terms of biological role, involved in the biosynthesis of ent-kaurene diterpenoids natural products. Catalyzes the conversion of ent-copalyl diphosphate to ent-pimara-8(14),15-diene. The protein is Ent-pimara-8(14),15-diene synthase of Oryza sativa subsp. japonica (Rice).